The sequence spans 139 residues: Holo-[acyl-carrier-protein] synthase (139 aa).

Mg(2+) is bound by residues D8 and E57.

Belongs to the P-Pant transferase superfamily. AcpS family. Requires Mg(2+) as cofactor.

The protein localises to the cytoplasm. The enzyme catalyses apo-[ACP] + CoA = holo-[ACP] + adenosine 3',5'-bisphosphate + H(+). Functionally, transfers the 4'-phosphopantetheine moiety from coenzyme A to a Ser of acyl-carrier-protein. The chain is Holo-[acyl-carrier-protein] synthase from Dinoroseobacter shibae (strain DSM 16493 / NCIMB 14021 / DFL 12).